We begin with the raw amino-acid sequence, 64 residues long: MPKIKTHRGAAKRFKKTGTGKIKRSKAYASHLLGGKSPKRKRNLRKAGLVSEAETRGISRLIPY.

The segment covering 1–26 (MPKIKTHRGAAKRFKKTGTGKIKRSK) has biased composition (basic residues). Residues 1 to 48 (MPKIKTHRGAAKRFKKTGTGKIKRSKAYASHLLGGKSPKRKRNLRKAG) are disordered.

It belongs to the bacterial ribosomal protein bL35 family.

The chain is Large ribosomal subunit protein bL35 from Syntrophomonas wolfei subsp. wolfei (strain DSM 2245B / Goettingen).